A 416-amino-acid polypeptide reads, in one-letter code: Counting factor 60 (416 aa).

Residues 1–22 form the signal peptide; sequence MIKKSALITLFLVSLILGVSLS. N110, N218, N231, N318, and N411 each carry an N-linked (GlcNAc...) asparagine glycan.

It belongs to the histidine acid phosphatase family. As to quaternary structure, component of the counting factor (CF) complex, which includes cf60, cf50, cf45-1 and ctnA.

The protein resides in the secreted. Cell-counting factor that limits the maximum size of the multicellular structure. Does not possess acid phosphatase activity. Cells with decreased levels of this protein form large groups while cells overexpressing this protein form small groups. The sequence is that of Counting factor 60 (cf60) from Dictyostelium discoideum (Social amoeba).